Reading from the N-terminus, the 101-residue chain is Large ribosomal subunit protein uL23 (101 aa).

Belongs to the universal ribosomal protein uL23 family. Part of the 50S ribosomal subunit. Contacts protein L29, and trigger factor when it is bound to the ribosome.

Its function is as follows. One of the early assembly proteins it binds 23S rRNA. One of the proteins that surrounds the polypeptide exit tunnel on the outside of the ribosome. Forms the main docking site for trigger factor binding to the ribosome. In Rhodococcus erythropolis (strain PR4 / NBRC 100887), this protein is Large ribosomal subunit protein uL23.